A 1215-amino-acid polypeptide reads, in one-letter code: DNA-directed RNA polymerase subunit beta' (1215 aa).

4 residues coordinate Zn(2+): C60, C62, C75, and C78. Residues D449, D451, and D453 each coordinate Mg(2+). Zn(2+)-binding residues include C818, C892, C899, and C902.

This sequence belongs to the RNA polymerase beta' chain family. In terms of assembly, the RNAP catalytic core consists of 2 alpha, 1 beta, 1 beta' and 1 omega subunit. When a sigma factor is associated with the core the holoenzyme is formed, which can initiate transcription. It depends on Mg(2+) as a cofactor. Zn(2+) is required as a cofactor.

The enzyme catalyses RNA(n) + a ribonucleoside 5'-triphosphate = RNA(n+1) + diphosphate. In terms of biological role, DNA-dependent RNA polymerase catalyzes the transcription of DNA into RNA using the four ribonucleoside triphosphates as substrates. The chain is DNA-directed RNA polymerase subunit beta' from Limosilactobacillus fermentum (strain NBRC 3956 / LMG 18251) (Lactobacillus fermentum).